A 165-amino-acid polypeptide reads, in one-letter code: Protein FAM219A (165 aa).

Met-1 carries the N-acetylmethionine modification. The interval 1 to 114 (MMEEIDRFQV…SRYSSSGYSS (114 aa)) is disordered. Over residues 32-44 (CDAREEKQRELAR) the composition is skewed to basic and acidic residues. A compositionally biased stretch (polar residues) spans 49 to 63 (KNGSMGSPVNQQPKK). Residues Ser-55 and Ser-85 each carry the phosphoserine modification. The residue at position 96 (Thr-96) is a Phosphothreonine. A phosphoserine mark is found at Ser-98 and Ser-105. A compositionally biased stretch (low complexity) spans 105–114 (SRYSSSGYSS).

Belongs to the FAM219 family.

The polypeptide is Protein FAM219A (FAM219A) (Macaca fascicularis (Crab-eating macaque)).